We begin with the raw amino-acid sequence, 503 residues long: Annexin A11 (503 aa).

3 stretches are compositionally biased toward pro residues: residues methionine 1 to proline 17, glycine 80 to glycine 145, and serine 155 to proline 169. 2 disordered regions span residues methionine 1–isoleucine 35 and alanine 56–threonine 178. Annexin repeat units follow at residues phenylalanine 198–lysine 269, threonine 270–glutamine 341, serine 353–lysine 425, and asparagine 429–glycine 500. An N6-acetyllysine mark is found at lysine 246 and lysine 253. An N6-acetyllysine modification is found at lysine 477.

Belongs to the annexin family. As to quaternary structure, interacts with PDCD6 in a calcium-dependent manner. Interacts with KIF23 during cytokinesis. Interacts with S100A6.

It localises to the cytoplasm. The protein localises to the melanosome. The protein resides in the nucleus envelope. It is found in the nucleus. Its subcellular location is the nucleoplasm. It localises to the cytoskeleton. The protein localises to the spindle. Functionally, required for midbody formation and completion of the terminal phase of cytokinesis. Binds specifically to calcyclin in a calcium-dependent manner. This Oryctolagus cuniculus (Rabbit) protein is Annexin A11 (ANXA11).